The chain runs to 166 residues: SUMO-conjugating enzyme UBC9 (166 aa).

Positions 4 to 157 (IAAGRLAEER…VKKEAVKYAA (154 aa)) constitute a UBC core domain. The active-site Glycyl thioester intermediate is the C93.

The protein belongs to the ubiquitin-conjugating enzyme family. As to quaternary structure, interacts with brd-1 and rad-51. Interacts with smo-1 and sop-2. Interacts with bet-1 (via BROMO domain 2). Interacts with isoforms 1 and 2 of X-box-binding protein xbp-1.

The protein localises to the nucleus envelope. It participates in protein modification; protein sumoylation. Functionally, accepts the ubiquitin-like protein smo-1 from the aos-1-uba-2 E1 complex and catalyzes its covalent attachment to other proteins with the help of an E3 ligase such as gei-17. Required to sumoylate the ETS transcription factor lin-1, Polycomb protein sop-2, and intermediate filament proteins, such as ifb-1. Required for embryonic development, fertility, vulval morphogenesis, inhibition of vulval cell fates, lifespan, and neuromuscular activity. In Caenorhabditis elegans, this protein is SUMO-conjugating enzyme UBC9.